The following is a 135-amino-acid chain: Large ribosomal subunit protein uL16c (135 aa).

Belongs to the universal ribosomal protein uL16 family. Part of the 50S ribosomal subunit.

The protein localises to the plastid. It is found in the chloroplast. The polypeptide is Large ribosomal subunit protein uL16c (Ceratophyllum demersum (Rigid hornwort)).